The following is a 78-amino-acid chain: Putative snRNP Sm-like protein (78 aa).

Residues 4 to 76 (RPLDVIHRSL…VLAISPVDVG (73 aa)) form the Sm domain.

This sequence belongs to the snRNP Sm proteins family.

The protein is Putative snRNP Sm-like protein of Thermococcus onnurineus (strain NA1).